We begin with the raw amino-acid sequence, 654 residues long: Biotin-dependent 3-methylcrotonyl-coenzyme A carboxylase alpha1 subunit (654 aa).

The 448-residue stretch at 1-448 folds into the Biotin carboxylation domain; that stretch reads MFDTVLVANR…DTAVLDERSA (448 aa). In terms of domain architecture, ATP-grasp spans 120–319; sequence KNAVAAFDVP…LVEWQLRVGA (200 aa). 148–209 contributes to the ATP binding site; sequence AAEVGYPVLI…ERFVLRPRHI (62 aa). E275, E290, and N292 together coordinate Mg(2+). Positions 275, 290, and 292 each coordinate Mn(2+). The 76-residue stretch at 578–653 folds into the Biotinyl-binding domain; that stretch reads HRAVGARPAE…KVEQVLARIK (76 aa). K620 carries the N6-biotinyllysine modification.

The biotin-dependent acyl-CoA carboxylase complex is composed of AccA1, which contains the biotin carboxylase (BC) and biotin carboxyl carrier protein (BCCP) domains, and AccD1, which contains the carboxyl transferase (CT) domain. The AccA1/AccD1 complex forms a dodecamer. The cofactor is Mg(2+). Mn(2+) is required as a cofactor. Biotin serves as cofactor.

It carries out the reaction N(6)-biotinyl-L-lysyl-[protein] + hydrogencarbonate + ATP = N(6)-carboxybiotinyl-L-lysyl-[protein] + ADP + phosphate + H(+). It participates in amino-acid degradation; L-leucine degradation. In terms of biological role, component of a biotin-dependent acyl-CoA carboxylase complex. This subunit catalyzes the ATP-dependent carboxylation of the biotin carried by the biotin carboxyl carrier (BCC) domain, resulting in the formation of carboxyl biotin. When associated with the beta1 subunit AccD1, is involved in branched amino-acid catabolism with methylcrotonyl coenzyme A as the substrate. This Mycobacterium bovis (strain ATCC BAA-935 / AF2122/97) protein is Biotin-dependent 3-methylcrotonyl-coenzyme A carboxylase alpha1 subunit (accA1).